A 249-amino-acid chain; its full sequence is MSSRYDRAVTIFSPDGHLLQVEYAQEAVRKGSTAVGVRGANCVVLGVEKKSVAQLQEDRKVRKICMLDNHVVMAFAGLTADARIMINRAQVECQSHRLNVEDPVTLEYITRFIAQLKQKYTQSNGRRPFGISCLIGGFDADGSAHLFQTEPSGIFYEYKANATGRSAKVVREFFEKSYREEEVANEHGAVKLAIRALLEVAQSGQNNLEVAIMENGKPLKMLDTDVITDYVKIIEKEKEEELEKKKQKK.

Ser-177 is modified (phosphoserine).

It belongs to the peptidase T1A family. The 26S proteasome consists of a 20S proteasome core and two 19S regulatory subunits. The 20S proteasome core is composed of 28 subunits that are arranged in four stacked rings, resulting in a barrel-shaped structure. The two end rings are each formed by seven alpha subunits, and the two central rings are each formed by seven beta subunits. The catalytic chamber with the active sites is on the inside of the barrel. Interacts with PI31; this interaction is reduced by PI31 ADP-ribosylation.

The protein resides in the cytoplasm. It localises to the nucleus. In terms of biological role, the proteasome is a multicatalytic proteinase complex which is characterized by its ability to cleave peptides with Arg, Phe, Tyr, Leu, and Glu adjacent to the leaving group at neutral or slightly basic pH. The proteasome has an ATP-dependent proteolytic activity. This chain is Proteasome subunit alpha type-7-1 (Prosalpha4), found in Drosophila melanogaster (Fruit fly).